A 474-amino-acid chain; its full sequence is Bifunctional protein HldE (474 aa).

A ribokinase region spans residues 1 to 318 (MKLSMPRFDQ…RAVQREQGSE (318 aa)). Residue 194–197 (NLSE) coordinates ATP. D263 is an active-site residue. The tract at residues 343 to 474 (FTNGCFDILH…AIVEKIRQKG (132 aa)) is cytidylyltransferase.

It in the N-terminal section; belongs to the carbohydrate kinase PfkB family. In the C-terminal section; belongs to the cytidylyltransferase family. As to quaternary structure, homodimer.

It carries out the reaction D-glycero-beta-D-manno-heptose 7-phosphate + ATP = D-glycero-beta-D-manno-heptose 1,7-bisphosphate + ADP + H(+). The catalysed reaction is D-glycero-beta-D-manno-heptose 1-phosphate + ATP + H(+) = ADP-D-glycero-beta-D-manno-heptose + diphosphate. It functions in the pathway nucleotide-sugar biosynthesis; ADP-L-glycero-beta-D-manno-heptose biosynthesis; ADP-L-glycero-beta-D-manno-heptose from D-glycero-beta-D-manno-heptose 7-phosphate: step 1/4. Its pathway is nucleotide-sugar biosynthesis; ADP-L-glycero-beta-D-manno-heptose biosynthesis; ADP-L-glycero-beta-D-manno-heptose from D-glycero-beta-D-manno-heptose 7-phosphate: step 3/4. It participates in bacterial outer membrane biogenesis; LPS core biosynthesis. Its function is as follows. Catalyzes the phosphorylation of D-glycero-D-manno-heptose 7-phosphate at the C-1 position to selectively form D-glycero-beta-D-manno-heptose-1,7-bisphosphate. Functionally, catalyzes the ADP transfer from ATP to D-glycero-beta-D-manno-heptose 1-phosphate, yielding ADP-D-glycero-beta-D-manno-heptose. The sequence is that of Bifunctional protein HldE from Pseudomonas aeruginosa (strain ATCC 15692 / DSM 22644 / CIP 104116 / JCM 14847 / LMG 12228 / 1C / PRS 101 / PAO1).